Consider the following 528-residue polypeptide: Na(+)/H(+) antiporter NhaB (528 aa).

Helical transmembrane passes span 28–50, 67–87, 98–118, 140–160, 240–260, 305–325, 350–370, 391–411, 449–469, and 476–496; these read FLVINPLLFFYVSPFVAGWVLVV, PGGLLAIQAVFIGMTSPSQVL, LLLVFMVAGIYFMKQLLLFVF, AFLSAFLDALTVIAVIIAVAV, FFLRMSPVTMPVLVAGIFTCF, ALIGVWLIAGLALHLASVGLI, EEALPFTALLAVFFAIVGVII, LVIFYIANGLLSMVSDNVFVG, ATPNGQAAFLFLLTSAIAPLI, and MVWMALPYTIVLSIVGVMAIE.

The protein belongs to the NhaB Na(+)/H(+) (TC 2.A.34) antiporter family.

The protein localises to the cell inner membrane. The catalysed reaction is 2 Na(+)(in) + 3 H(+)(out) = 2 Na(+)(out) + 3 H(+)(in). In terms of biological role, na(+)/H(+) antiporter that extrudes sodium in exchange for external protons. This Shewanella frigidimarina (strain NCIMB 400) protein is Na(+)/H(+) antiporter NhaB.